A 722-amino-acid polypeptide reads, in one-letter code: Disintegrin and metalloproteinase domain-containing protein 21 (722 aa).

The first 31 residues, 1-31 (MAVDGTLVYIRVTLLLLWLGVFLSISGYCQA), serve as a signal peptide directing secretion. Positions 32-196 (GPSQHFTSPE…FEEAENSALE (165 aa)) are excised as a propeptide. N-linked (GlcNAc...) asparagine glycosylation occurs at asparagine 164. A Cysteine switch motif is present at residues 171–178 (MRCGLTEK). Cysteine 173 is a binding site for Zn(2+). Residues 197-681 (PKSAGDWWTH…DSGPASAKRG (485 aa)) are Extracellular-facing. One can recognise a Peptidase M12B domain in the interval 208 to 398 (WFLELVVVVN…NQGSCLHNPP (191 aa)). Asparagine 227 carries an N-linked (GlcNAc...) asparagine glycan. 3 cysteine pairs are disulfide-bonded: cysteine 316-cysteine 393, cysteine 356-cysteine 378, and cysteine 358-cysteine 363. Histidine 341 contributes to the Zn(2+) binding site. The active site involves glutamate 342. Zn(2+)-binding residues include histidine 345 and histidine 351. N-linked (GlcNAc...) asparagine glycans are attached at residues asparagine 377, asparagine 437, asparagine 478, asparagine 546, and asparagine 600. The region spanning 406–492 (LKRCGNGVVE…QCPEDRYVQD (87 aa)) is the Disintegrin domain. A disulfide bridge links cysteine 464 with cysteine 484. Cystine bridges form between cysteine 634-cysteine 645, cysteine 639-cysteine 651, and cysteine 653-cysteine 662. Residues 634–663 (CLPETCNMKGICNNKHHCHCGYGWSPPYCQ) form the EGF-like domain. Residues 682 to 702 (VFLPLIVIPSLSVLTFLFTVG) traverse the membrane as a helical segment. At 703 to 722 (LLMYLRQCSGPKETKAHSSG) the chain is on the cytoplasmic side.

It depends on Zn(2+) as a cofactor. Has no obvious cleavage site for furin endopeptidase, suggesting that the proteolytic processing is regulated.

The protein resides in the membrane. In terms of biological role, may be involved in sperm maturation and/or fertilization. May also be involved in epithelia functions associated with establishing and maintaining gradients of ions or nutrients. This is Disintegrin and metalloproteinase domain-containing protein 21 (ADAM21) from Homo sapiens (Human).